The primary structure comprises 662 residues: Zinc finger protein 800 (662 aa).

The segment at Phe69–Tyr91 adopts a C2H2-type 1; degenerate zinc-finger fold. Lys132 is covalently cross-linked (Glycyl lysine isopeptide (Lys-Gly) (interchain with G-Cter in SUMO2)). Disordered regions lie at residues Glu172–Ile197 and Ala205–Ser224. Positions Ala205–Gln216 are enriched in low complexity. The C2H2-type 2 zinc-finger motif lies at Leu231–His254. Residue Lys280 forms a Glycyl lysine isopeptide (Lys-Gly) (interchain with G-Cter in SUMO2) linkage. A C2H2-type 3 zinc finger spans residues Arg288–His311. Ser318 carries the post-translational modification Phosphoserine. The disordered stretch occupies residues Ile319–Ser349. Residue Thr320 is modified to Phosphothreonine. Ser337 is subject to Phosphoserine. Over residues Lys340–Ser349 the composition is skewed to basic residues. The C2H2-type 4 zinc finger occupies Thr357 to His382. The disordered stretch occupies residues Ala389 to Pro473. Lys392 participates in a covalent cross-link: Glycyl lysine isopeptide (Lys-Gly) (interchain with G-Cter in SUMO2). A compositionally biased stretch (polar residues) spans Val414–His434. A phosphoserine mark is found at Ser420, Ser424, Ser453, Ser455, Ser458, and Ser460. Low complexity predominate over residues Pro456–Gln468. Lys474 is covalently cross-linked (Glycyl lysine isopeptide (Lys-Gly) (interchain with G-Cter in SUMO2)). 2 consecutive C2H2-type zinc fingers follow at residues Leu484–His506 and Tyr517–His540. Disordered regions lie at residues Arg573 to Lys597 and His633 to Val662. Basic and acidic residues predominate over residues Pro575–Gln587. Lys597 participates in a covalent cross-link: Glycyl lysine isopeptide (Lys-Gly) (interchain with G-Cter in SUMO2). Residues His616–His638 form a C2H2-type 7 zinc finger. Positions Thr651 to Val662 are enriched in basic residues.

This sequence belongs to the krueppel C2H2-type zinc-finger protein family.

Its subcellular location is the nucleus. Functionally, may be involved in transcriptional regulation. The protein is Zinc finger protein 800 (Znf800) of Mus musculus (Mouse).